Consider the following 134-residue polypeptide: Large-conductance mechanosensitive channel (134 aa).

Transmembrane regions (helical) follow at residues 10–30 and 76–96; these read FAMR…GAFG and GAFL…FVVI.

It belongs to the MscL family. In terms of assembly, homopentamer.

Its subcellular location is the cell inner membrane. Functionally, channel that opens in response to stretch forces in the membrane lipid bilayer. May participate in the regulation of osmotic pressure changes within the cell. In Prosthecochloris aestuarii (strain DSM 271 / SK 413), this protein is Large-conductance mechanosensitive channel.